Here is a 666-residue protein sequence, read N- to C-terminus: Chaperone protein dnaK1 (666 aa).

A Phosphothreonine; by autocatalysis modification is found at Thr198.

This sequence belongs to the heat shock protein 70 family.

Acts as a chaperone. The polypeptide is Chaperone protein dnaK1 (dnaK1) (Prochlorococcus marinus (strain SARG / CCMP1375 / SS120)).